The following is a 43-amino-acid chain: METATLITIFLSGLLVSFTGYALYTAFGQPSQQLRDPFEEHGD.

The chain crosses the membrane as a helical span at residues 7–29; sequence ITIFLSGLLVSFTGYALYTAFGQ.

The protein belongs to the PsbN family.

The protein resides in the plastid membrane. Functionally, may play a role in photosystem I and II biogenesis. This Cuscuta reflexa (Southern Asian dodder) protein is Protein PsbN.